The sequence spans 571 residues: Vesicle-associated protein 1-4 (571 aa).

The 126-residue stretch at 1–126 folds into the MSP 1 domain; that stretch reads MSTDELLTFD…EETIFKIIYV (126 aa). Positions 132-154 are disordered; the sequence is QSPVQEGLEDGSSPSASVSDKGN. The span at 143–153 shows a compositional bias: polar residues; the sequence is SSPSASVSDKG. Residues 176 to 296 enclose the MSP 2 domain; it reads LLIIDPVDVQ…EETRLKVMYV (121 aa). The interval 297-322 is disordered; that stretch reads TPPQPPSPVQEGTEEGSSPRASVSDN. A compositionally biased stretch (polar residues) spans 311 to 322; the sequence is EGSSPRASVSDN. In terms of domain architecture, TIR spans 356 to 493; that stretch reads PQYQVFINFR…KWKEALSSVF (138 aa). The active site involves glutamate 430.

This sequence belongs to the VAMP-associated protein (VAP) (TC 9.B.17) family.

It catalyses the reaction NAD(+) + H2O = ADP-D-ribose + nicotinamide + H(+). May play a role in vesicle trafficking. The chain is Vesicle-associated protein 1-4 (PVA14) from Arabidopsis thaliana (Mouse-ear cress).